A 209-amino-acid polypeptide reads, in one-letter code: Large ribosomal subunit protein uL3 (209 aa).

Residues 130–162 (RGPMTHGSKFKRAPGSMGASSDPSRTFKNKRMP) are disordered.

Belongs to the universal ribosomal protein uL3 family. As to quaternary structure, part of the 50S ribosomal subunit. Forms a cluster with proteins L14 and L19.

In terms of biological role, one of the primary rRNA binding proteins, it binds directly near the 3'-end of the 23S rRNA, where it nucleates assembly of the 50S subunit. This is Large ribosomal subunit protein uL3 from Clostridium botulinum (strain Alaska E43 / Type E3).